A 1224-amino-acid polypeptide reads, in one-letter code: Tyrosine-protein kinase abl-1 (1224 aa).

Residues 115 to 188 (SSAPLFVALY…PSNFIAPYNS (74 aa)) enclose the SH3 domain. The 91-residue stretch at 194 to 284 (WYHGKISRSD…GLICLLMYPA (91 aa)) folds into the SH2 domain. One can recognise a Protein kinase domain in the interval 311-562 (IIMHNKLGGG…PRFRDIHFNL (252 aa)). ATP-binding positions include 317–325 (LGGGQYGDV), K340, and 385–391 (EFMCNGN). The active-site Proton acceptor is D432. The Kinase activation loop motif lies at 450-474 (DFGLARFMKEDTYTAHAGAKFPIKW). Over residues 579 to 620 (LKKNNDKKLESDKRRSNVRERSDSKSRHSSHHDRDRDRESLH) the composition is skewed to basic and acidic residues. 5 disordered regions span residues 579–671 (LKKN…NTKP), 736–775 (KESTDADNEGAGSSSLSRTVSNDSLDTLPLPDSMNSSTYV), 796–881 (KRSE…DVGM), 914–937 (LRHVPKEESNTSSQEDLPLDATDN), and 968–1016 (RPFS…RSNG). Polar residues-rich tracts occupy residues 639 to 655 (SVSFFNPSTTSKVTSFR) and 746 to 760 (AGSSSLSRTVSNDSL). Basic and acidic residues-rich tracts occupy residues 797-819 (RSETPELDHIDSDTADETTKSEK) and 864-877 (PDSKAEDSSDETTK). The segment covering 973-984 (QCPNNSTSSAIS) has biased composition (polar residues). Basic and acidic residues predominate over residues 1001-1016 (YEERMKPELPRKRSNG).

It belongs to the protein kinase superfamily. Tyr protein kinase family. ABL subfamily. Interacts (via SH2 and SH3 domains) with mig-13; the interaction is direct. May interact with soem-1.

It localises to the cell membrane. It is found in the cytoplasm. The catalysed reaction is L-tyrosyl-[protein] + ATP = O-phospho-L-tyrosyl-[protein] + ADP + H(+). In terms of biological role, functions downstream of migratory protein mig-13 and is involved in Q neuroblast migration during larval development. Recruited by mig-13 to the leading edge of Q neuroblasts and their descendents to signal downstream, likely to the wve-1 pathway, and direct migration along the anteroposterior body axis. Promotes germline cell apoptosis in response to oxidative, osmotic and heat shock stresses. In Caenorhabditis elegans, this protein is Tyrosine-protein kinase abl-1 (abl-1).